The primary structure comprises 54 residues: Large ribosomal subunit protein bL33 (54 aa).

This sequence belongs to the bacterial ribosomal protein bL33 family.

This Frankia alni (strain DSM 45986 / CECT 9034 / ACN14a) protein is Large ribosomal subunit protein bL33.